Reading from the N-terminus, the 689-residue chain is Elongation factor G (689 aa).

A tr-type G domain is found at 8-282; the sequence is ERTRNIGIMA…GVVAYMPSPL (275 aa). GTP is bound by residues 17-24, 81-85, and 135-138; these read AHIDAGKT, DTPGH, and NKMD.

Belongs to the TRAFAC class translation factor GTPase superfamily. Classic translation factor GTPase family. EF-G/EF-2 subfamily.

It localises to the cytoplasm. Functionally, catalyzes the GTP-dependent ribosomal translocation step during translation elongation. During this step, the ribosome changes from the pre-translocational (PRE) to the post-translocational (POST) state as the newly formed A-site-bound peptidyl-tRNA and P-site-bound deacylated tRNA move to the P and E sites, respectively. Catalyzes the coordinated movement of the two tRNA molecules, the mRNA and conformational changes in the ribosome. This Alkaliphilus metalliredigens (strain QYMF) protein is Elongation factor G.